A 447-amino-acid polypeptide reads, in one-letter code: Na(+)/H(+) antiporter NhaA 2 (447 aa).

Transmembrane regions (helical) follow at residues 30–50, 81–101, 117–137, 146–166, 175–195, 199–219, 220–240, 315–335, 350–370, 383–403, and 415–435; these read FIHI…LAVL, LHKW…ALEL, LLSI…YLLL, GWGT…ALLG, IFML…VAIG, AVDW…RAMA, FLGV…WLVI, LLHP…NAGV, VFVG…WIAV, WGMV…ALFI, and AAKL…FLCL.

Belongs to the NhaA Na(+)/H(+) (TC 2.A.33) antiporter family.

It localises to the cell inner membrane. The enzyme catalyses Na(+)(in) + 2 H(+)(out) = Na(+)(out) + 2 H(+)(in). Functionally, na(+)/H(+) antiporter that extrudes sodium in exchange for external protons. This is Na(+)/H(+) antiporter NhaA 2 from Vibrio vulnificus (strain CMCP6).